The following is a 96-amino-acid chain: Evasin P1074 (96 aa).

The signal sequence occupies residues methionine 1–alanine 28. 3 cysteine pairs are disulfide-bonded: cysteine 48/cysteine 67, cysteine 52/cysteine 69, and cysteine 63/cysteine 80. An N-linked (GlcNAc...) asparagine glycan is attached at asparagine 74.

It localises to the secreted. In terms of biological role, salivary chemokine-binding protein which binds to host chemokines CXCL1 and CXCL8. The sequence is that of Evasin P1074 from Ixodes ricinus (Common tick).